We begin with the raw amino-acid sequence, 352 residues long: Aromatic amino acid aminotransferase (352 aa).

Lys217 bears the N6-(pyridoxal phosphate)lysine mark.

The protein belongs to the class-II pyridoxal-phosphate-dependent aminotransferase family. As to quaternary structure, homodimer. Requires pyridoxal 5'-phosphate as cofactor.

It carries out the reaction an aromatic L-alpha-amino acid + 2-oxoglutarate = an aromatic oxo-acid + L-glutamate. Its function is as follows. Aminotransferase that catalyzes the conversion of aromatic amino acids and 2-oxoglutarate into corresponding aromatic oxo acids and L-glutamate. The polypeptide is Aromatic amino acid aminotransferase (Cutibacterium acnes (strain DSM 16379 / KPA171202) (Propionibacterium acnes)).